Reading from the N-terminus, the 360-residue chain is Photosystem II protein D1 (360 aa).

3 helical membrane-spanning segments follow: residues Y29–S46, H118–L133, and W142–A156. H118 contributes to the chlorophyll a binding site. Residue Y126 participates in pheophytin a binding. The [CaMn4O5] cluster site is built by D170 and E189. Residues F197–L218 form a helical membrane-spanning segment. A chlorophyll a-binding site is contributed by H198. A quinone-binding positions include H215 and S264–F265. A Fe cation-binding site is contributed by H215. Residue H272 participates in Fe cation binding. The chain crosses the membrane as a helical span at residues F274–L288. Residues H332, E333, D342, and A344 each contribute to the [CaMn4O5] cluster site. A propeptide spanning residues S345–G360 is cleaved from the precursor.

Belongs to the reaction center PufL/M/PsbA/D family. PSII is composed of 1 copy each of membrane proteins PsbA, PsbB, PsbC, PsbD, PsbE, PsbF, PsbH, PsbI, PsbJ, PsbK, PsbL, PsbM, PsbT, PsbX, PsbY, PsbZ, Psb30/Ycf12, at least 3 peripheral proteins of the oxygen-evolving complex and a large number of cofactors. It forms dimeric complexes. The D1/D2 heterodimer binds P680, chlorophylls that are the primary electron donor of PSII, and subsequent electron acceptors. It shares a non-heme iron and each subunit binds pheophytin, quinone, additional chlorophylls, carotenoids and lipids. D1 provides most of the ligands for the Mn4-Ca-O5 cluster of the oxygen-evolving complex (OEC). There is also a Cl(-1) ion associated with D1 and D2, which is required for oxygen evolution. The PSII complex binds additional chlorophylls, carotenoids and specific lipids. serves as cofactor. In terms of processing, tyr-161 forms a radical intermediate that is referred to as redox-active TyrZ, YZ or Y-Z. Post-translationally, C-terminally processed by CTPA; processing is essential to allow assembly of the oxygen-evolving complex and thus photosynthetic growth.

The protein resides in the plastid. It is found in the chloroplast thylakoid membrane. The enzyme catalyses 2 a plastoquinone + 4 hnu + 2 H2O = 2 a plastoquinol + O2. In terms of biological role, photosystem II (PSII) is a light-driven water:plastoquinone oxidoreductase that uses light energy to abstract electrons from H(2)O, generating O(2) and a proton gradient subsequently used for ATP formation. It consists of a core antenna complex that captures photons, and an electron transfer chain that converts photonic excitation into a charge separation. The D1/D2 (PsbA/PsbD) reaction center heterodimer binds P680, the primary electron donor of PSII as well as several subsequent electron acceptors. The protein is Photosystem II protein D1 of Heterosigma akashiwo (Chromophytic alga).